Here is a 1709-residue protein sequence, read N- to C-terminus: MRTRFLATDYFAPSSSSAAGKALALEFFSFPSLPVPALPPDPHFLPFTSADELPAATVADDGLGPLPIASALSDFLAAVIPQALPVPTVPAADEVLDDFLYDRGGYGEDFSSWEFGAFRIPKASEGYGVINREKDEKGEGSRSDGLEISSVMKRWEQLKELRFEVVEVDLLMALQEDIASFGEEESGGGVTLLLRVPDMKIHLDFIDIETDIKIRYQSDLPESVYQVEKVPVKDNDGNGHSSLREDCCLEIAALDHGAVIPRLEVSRNSWELDDCLTETDRYGVFDNVVRHLDEAQIQHSVFKSTEFLRSTDMDMLTFVCEDAPCHDIQVDKPAEIKAAVEMDVVRINGNILLEKNSALYPLKPDGTCSDLPCSILLEEVQIIDFPSDNVFKMLVQSETNKMNISDEIFKDDFDPARRLYESMVSCELALVDDTFRSLPTPILNDDIAVRSRVPPIQEILCSLKPHPLSASDGIYLDWHLLLEGPCNREICCSYASMVEEAKTCHLSSELQRSCQSTSVFVSDFLEDFQRSPKLQDEDKHSDIYVPAPLSHDPQKLEATQKCEQEGGTRNHSSMKRPSPEKSSSFPELISHSGDLNFYLNVRSATKSGTNNENTSTLDVPHSEEQALSLSTRAKVDKLIEIHPVSPSNLIQGLIEQIHASYTSALQESTYWRHSFSDEQGLGISKQKLLELITGEGSEGSYNHCEHKDKMELIVLYALKQVAYYLCFFGLHAAHLYISNLTRSLENTPERLKHILWSISEAQRKSERQLFESHPSLSCIETILRSNKQIDQKILIVADRAFWLPLGQKLASMRMTFVEFGQNPATTFVDLVNKTNSTAWVLEELLKSDCILLDNKNIPASFPFDKFGIILEYGGPNKSSTLLSLAPKLDGLPPLHFLYVKVDGKDFPAALVEDNHKDQDLKSTLDKVLLTLQKDLQERMNKMRIVDSLNFIPATNQLQGLQEKRSKHFAADATKELLPDDQPHRLQNLNKKNTFDSHNVVLADEQLHIQQTLSNKPVVNSQCVPTVEKSSSTSSVSANVLKDPQENQSTTDLPSCVKNDCIMPGRLSVPDVVIVVNTGNHGKTMLVSRRSSYQQILALEKGGMQVVERDIDLPVDLILSAAVCLVWYETALFEANELTTSAETSGIKENVENIATNILMSVSFSFTGCIMVFEGEADFLSAVMDSSDSLYTAAASLDMNLQLFFSHTPRSTDEIILNCITNVTSCYKAPLPDIPESESLAESFLTSFPSINPVSAYMLLSSGGSLVEFLSWPHERRIQAVGKYLLSPKIISLFNALCKFGELGESRSVMTECSSVDSDISSAFLQSPRKRKQRSLQACAVPTNKLLFSDSLNQIPGDYAEHAEVFSPSKLRKFSDMDNTIPELPDVFTFDESLNMRSEGFSYQQKKHDVDAIPGNQVINDDFSNGLTPNNQAYNRRTGNMVDTFDLPWQPEFGGTHPSKSTFHTSRPSCSRTHSNPVFSTAFEINDDPGEWNISGGTKQTWKGLAHGGTVDDSYRYDMDNRYHEPRDEIMQHPASSLAFQKLDFGSHATSQGSCWEIDYLRQMSAKRKARQERSRCSNSPGMSIPRMRDSNSKILNPPPKESFRYRGDRDTPSRDQSPSIGTQHYGKGKEGAKAQNRRARKDFNVQPTSHKKRIEPSIDPTWTPIDKRARQKLSFVTYGKEKQSKLVWRNQNSPGVGCGFRKRFREEGT.

3 stretches are compositionally biased toward basic and acidic residues: residues 532–542 (PKLQDEDKHSD), 552–568 (DPQKLEATQKCEQEGGT), and 1601–1613 (ESFRYRGDRDTPS). Disordered stretches follow at residues 532–586 (PKLQ…SSFP) and 1566–1662 (KRKA…DPTW).

The protein belongs to the XPF family. As to quaternary structure, interacts (via C-terminus) with PTD. Interacts with ZIP4. Highly expressed in anthers and pistil during meiosis. Expressed in pollen mother cells (PMCs) during meiosis. Expressed at low levels in roots, shoots, leaves, flowers, and glumes.

It is found in the chromosome. Its subcellular location is the nucleus. The protein resides in the cytoplasm. It localises to the cell membrane. Its function is as follows. Essential for normal crossover (CO) formation during meiosis. Essential component for the formation of class I meiotic COs. Interacts with PTD, another meiotic component, to regulate CO formation, possibly by stabilizing the recombination intermediates during meiosis. SHOC1 and PTD may form transient heterotrimeric or heterotetrameric complexes with HEI10 and/or ZIP4 to promote class I COs formation. Does not seem to be involved in early meiotic recombination steps involving double-strand break (DSB) formation, processing, and single-strand invasion. Does not seem to be involved in homologous pairing or synaptonemal complex (SC) assembly. The sequence is that of Protein SHORTAGE IN CHIASMATA 1 homolog from Oryza sativa subsp. japonica (Rice).